We begin with the raw amino-acid sequence, 224 residues long: ATP synthase subunit a (224 aa).

A run of 6 helical transmembrane segments spans residues 17-37 (FSLN…IYWL), 72-92 (IFIS…FPYI), 99-119 (LTLT…YGWI), 125-145 (MFAH…MVCI), 166-186 (IAGH…SYIL), and 187-207 (VTFL…VAMI).

It belongs to the ATPase A chain family. As to quaternary structure, F-type ATPases have 2 components, CF(1) - the catalytic core - and CF(0) - the membrane proton channel. CF(1) has five subunits: alpha(3), beta(3), gamma(1), delta(1), epsilon(1). CF(0) has three main subunits: a, b and c.

The protein resides in the mitochondrion inner membrane. Functionally, mitochondrial membrane ATP synthase (F(1)F(0) ATP synthase or Complex V) produces ATP from ADP in the presence of a proton gradient across the membrane which is generated by electron transport complexes of the respiratory chain. F-type ATPases consist of two structural domains, F(1) - containing the extramembraneous catalytic core and F(0) - containing the membrane proton channel, linked together by a central stalk and a peripheral stalk. During catalysis, ATP synthesis in the catalytic domain of F(1) is coupled via a rotary mechanism of the central stalk subunits to proton translocation. Key component of the proton channel; it may play a direct role in the translocation of protons across the membrane. The chain is ATP synthase subunit a (mt:ATPase6) from Drosophila melanogaster (Fruit fly).